Reading from the N-terminus, the 97-residue chain is Large ribosomal subunit protein uL23 (97 aa).

The protein belongs to the universal ribosomal protein uL23 family. Part of the 50S ribosomal subunit. Contacts protein L29, and trigger factor when it is bound to the ribosome.

One of the early assembly proteins it binds 23S rRNA. One of the proteins that surrounds the polypeptide exit tunnel on the outside of the ribosome. Forms the main docking site for trigger factor binding to the ribosome. The chain is Large ribosomal subunit protein uL23 from Brucella melitensis biotype 2 (strain ATCC 23457).